We begin with the raw amino-acid sequence, 437 residues long: tRNA-2-methylthio-N(6)-dimethylallyladenosine synthase (437 aa).

The MTTase N-terminal domain occupies 1 to 115 (MKVYIETMGC…ISQVIHKEKA (115 aa)). Residues C10, C46, C78, C148, C152, and C155 each coordinate [4Fe-4S] cluster. The Radical SAM core domain occupies 134–367 (KKAQIRSLLN…QNRHKEILEE (234 aa)). Positions 370–436 (KLEVGKTHVV…KGRLMAATKG (67 aa)) constitute a TRAM domain.

Belongs to the methylthiotransferase family. MiaB subfamily. As to quaternary structure, monomer. It depends on [4Fe-4S] cluster as a cofactor.

Its subcellular location is the cytoplasm. The enzyme catalyses N(6)-dimethylallyladenosine(37) in tRNA + (sulfur carrier)-SH + AH2 + 2 S-adenosyl-L-methionine = 2-methylsulfanyl-N(6)-dimethylallyladenosine(37) in tRNA + (sulfur carrier)-H + 5'-deoxyadenosine + L-methionine + A + S-adenosyl-L-homocysteine + 2 H(+). Functionally, catalyzes the methylthiolation of N6-(dimethylallyl)adenosine (i(6)A), leading to the formation of 2-methylthio-N6-(dimethylallyl)adenosine (ms(2)i(6)A) at position 37 in tRNAs that read codons beginning with uridine. This chain is tRNA-2-methylthio-N(6)-dimethylallyladenosine synthase, found in Helicobacter pylori (strain ATCC 700392 / 26695) (Campylobacter pylori).